Reading from the N-terminus, the 244-residue chain is Transcriptional activator protein Anr (244 aa).

21-149 (APLCLPLSLN…RVMSREIRDD (129 aa)) is a binding site for a nucleoside 3',5'-cyclic phosphate. One can recognise an HTH crp-type domain in the interval 159 to 232 (KTADERIATF…GKEVHILDPI (74 aa)). Residues 192 to 211 (RNEIGNYLGLAVETVSRVFT) constitute a DNA-binding region (H-T-H motif).

Its function is as follows. Transcriptional activator of anaerobic gene expression. Regulates the expression of the components of the hydrogen cyanide synthase (HcnABC) in a positive manner. May also act as an iron sensor. This chain is Transcriptional activator protein Anr, found in Pseudomonas protegens (strain DSM 19095 / LMG 27888 / CFBP 6595 / CHA0).